A 373-amino-acid chain; its full sequence is Alanine dehydrogenase (373 aa).

Substrate-binding residues include arginine 15 and lysine 75. Residue histidine 96 is the Proton donor/acceptor of the active site. NAD(+) is bound by residues serine 134, 178 to 179 (IV), aspartate 198, serine 220, 239 to 240 (VL), 267 to 270 (VAID), arginine 280, and 299 to 302 (VANI). Aspartate 270 (proton donor/acceptor) is an active-site residue.

The protein belongs to the AlaDH/PNT family. As to quaternary structure, homohexamer. Trimer of dimer.

It localises to the cytoplasm. It catalyses the reaction L-alanine + NAD(+) + H2O = pyruvate + NH4(+) + NADH + H(+). It participates in amino-acid degradation; L-alanine degradation via dehydrogenase pathway; NH(3) and pyruvate from L-alanine: step 1/1. Functionally, catalyzes the reversible reductive amination of pyruvate to L-alanine. This enzyme is a key factor in the assimilation of L-alanine as an energy source through the tricarboxylic acid cycle. This Methanococcus maripaludis (strain DSM 14266 / JCM 13030 / NBRC 101832 / S2 / LL) protein is Alanine dehydrogenase.